Here is a 143-residue protein sequence, read N- to C-terminus: Sirohydrochlorin cobaltochelatase (143 aa).

His9 functions as the Proton acceptor in the catalytic mechanism. His9 lines the Co(2+) pocket. His9 lines the Ni(2+) pocket. Residues Glu45 and 70–75 (LAHGIH) each bind substrate. His75 provides a ligand contact to Co(2+). His75 lines the Ni(2+) pocket.

The protein belongs to the CbiX family. CbiXS subfamily. In terms of assembly, homotetramer; dimer of dimers.

It carries out the reaction Co-sirohydrochlorin + 2 H(+) = sirohydrochlorin + Co(2+). The catalysed reaction is Ni-sirohydrochlorin + 2 H(+) = sirohydrochlorin + Ni(2+). Its pathway is cofactor biosynthesis; adenosylcobalamin biosynthesis; cob(II)yrinate a,c-diamide from sirohydrochlorin (anaerobic route): step 1/10. In terms of biological role, catalyzes the insertion of Co(2+) into sirohydrochlorin as part of the anaerobic pathway to cobalamin biosynthesis. Involved in the biosynthesis of the unique nickel-containing tetrapyrrole coenzyme F430, the prosthetic group of methyl-coenzyme M reductase (MCR), which plays a key role in methanogenesis and anaerobic methane oxidation. Catalyzes the insertion of Ni(2+) into sirohydrochlorin to yield Ni-sirohydrochlorin. This is Sirohydrochlorin cobaltochelatase from Methanocaldococcus jannaschii (strain ATCC 43067 / DSM 2661 / JAL-1 / JCM 10045 / NBRC 100440) (Methanococcus jannaschii).